We begin with the raw amino-acid sequence, 84 residues long: Small ribosomal subunit protein bS16 (84 aa).

It belongs to the bacterial ribosomal protein bS16 family.

The protein is Small ribosomal subunit protein bS16 of Burkholderia mallei (strain NCTC 10247).